The primary structure comprises 511 residues: Histidine ammonia-lyase (511 aa).

The segment at residues 143–145 (ASG) is a cross-link (5-imidazolinone (Ala-Gly)). 2,3-didehydroalanine (Ser) is present on Ser-144.

This sequence belongs to the PAL/histidase family. Post-translationally, contains an active site 4-methylidene-imidazol-5-one (MIO), which is formed autocatalytically by cyclization and dehydration of residues Ala-Ser-Gly.

The protein resides in the cytoplasm. It catalyses the reaction L-histidine = trans-urocanate + NH4(+). The protein operates within amino-acid degradation; L-histidine degradation into L-glutamate; N-formimidoyl-L-glutamate from L-histidine: step 1/3. This Vibrio cholerae serotype O1 (strain ATCC 39315 / El Tor Inaba N16961) protein is Histidine ammonia-lyase.